The following is a 26-amino-acid chain: Toxin b subunit alpha (26 aa).

Toxin b is a heterodimer composed of toxin alpha and toxin beta. Expressed by the venom gland.

It localises to the secreted. In terms of biological role, binds to sodium channels (Nav) and affects the channel activation process. The chain is Toxin b subunit alpha from Androctonus crassicauda (Arabian fat-tailed scorpion).